The chain runs to 208 residues: Ribonuclease HII (208 aa).

The 205-residue stretch at 1-205 (MIVVGIDEAG…LQEIAPNYYI (205 aa)) folds into the RNase H type-2 domain. Residues aspartate 7, glutamate 8, and aspartate 104 each contribute to the a divalent metal cation site.

This sequence belongs to the RNase HII family. Requires Mn(2+) as cofactor. Mg(2+) serves as cofactor.

The protein localises to the cytoplasm. It carries out the reaction Endonucleolytic cleavage to 5'-phosphomonoester.. Functionally, endonuclease that specifically degrades the RNA of RNA-DNA hybrids. This chain is Ribonuclease HII, found in Sulfurisphaera tokodaii (strain DSM 16993 / JCM 10545 / NBRC 100140 / 7) (Sulfolobus tokodaii).